A 452-amino-acid polypeptide reads, in one-letter code: MENHRSVFSNVIGDIVEKPPKQLVEVKRSVQRHARGFPAVSRTLPKRESKSMSAYKEKMLRKNKESPGLEGKGNLDDQGIDEENRVRLERMNDLEIEGAQEEIRATIRDDLLEMLKKRAFKKKAERELAQRKDRSSQVNTPDLSQRPSDDSFLSNEKLRSSEKLNRNLQSVLSSEAVDSSSGSPSPPMALSQAEIRSRQTKRVMFPDKAEELTKIFSLPTLAPIKGNEEDDASEDAKHSPKKHSPALSDGTTSNDGAPLEFDTTHLPEKQVTLDPNDPSFYEQLHDKYFPNLPVDEKQMQWLHDPSPAENSYHPSVESLHAHEIRFGFKGEIITPSQSQTIPVNEGLHHHGDAPFSAGYTLVELAHLLRSSFPTQRCIAIQTIGRIIYRLNSGEFREVLSPELHTLVEDAHIYELLAAAASDQVKHLTVRSLAIEALWLCSQSQHGSSRSAV.

Disordered stretches follow at residues 60-83 (LRKN…IDEE), 125-202 (EREL…QTKR), and 223-261 (PIKG…PLEF). The segment covering 125-135 (ERELAQRKDRS) has biased composition (basic and acidic residues). Polar residues predominate over residues 136–154 (SQVNTPDLSQRPSDDSFLS). A compositionally biased stretch (basic and acidic residues) spans 156-165 (EKLRSSEKLN). Positions 170 to 191 (SVLSSEAVDSSSGSPSPPMALS) are enriched in low complexity.

The protein belongs to the RPAP1 family. In terms of assembly, interacts with RNA polymerase II.

The protein localises to the cytoplasm. Its subcellular location is the nucleus. Functionally, forms an interface between the RNA polymerase II enzyme and chaperone/scaffolding proteins, suggesting that it is required to connect RNA polymerase II to regulators of protein complex formation. The protein is RNA polymerase II-associated protein rba50 (rba50) of Schizosaccharomyces pombe (strain 972 / ATCC 24843) (Fission yeast).